Reading from the N-terminus, the 89-residue chain is Protein YihD (89 aa).

To H.influenzae HI_0845.

This chain is Protein YihD (yihD), found in Escherichia coli O157:H7.